We begin with the raw amino-acid sequence, 316 residues long: Putative ubiquitin-conjugating enzyme E2 39 (316 aa).

Positions 57–217 (NWVKDIQKEW…VFVFSLKTMH (161 aa)) constitute a UBC core domain. Cysteine 143 functions as the Glycyl thioester intermediate in the catalytic mechanism.

The protein belongs to the ubiquitin-conjugating enzyme family.

The catalysed reaction is S-ubiquitinyl-[E1 ubiquitin-activating enzyme]-L-cysteine + [E2 ubiquitin-conjugating enzyme]-L-cysteine = [E1 ubiquitin-activating enzyme]-L-cysteine + S-ubiquitinyl-[E2 ubiquitin-conjugating enzyme]-L-cysteine.. It participates in protein modification; protein ubiquitination. Functionally, accepts the ubiquitin from the E1 complex and catalyzes its covalent attachment to other proteins. The sequence is that of Putative ubiquitin-conjugating enzyme E2 39 (UBC39) from Arabidopsis thaliana (Mouse-ear cress).